The primary structure comprises 228 residues: MVSTKFLNKLKNEYNIEFNNEKLLEEAFTHSSYSNEHPDDGIRDYEKLEFLGDAVLELAVSNYLYRHYPKLNEGELTRLRSNIVRTEGFSEFAIECGFQKEIHLGNGEEKAGARNRKTLLEDVFEAFNGALFLDQGMPAVERFLHLTVYPLIAKGEFDDSRDYKTDLQELLQQNGPVNIEYSVISESQLPSHFVVELKINDQVQTQGEGHNKKAAEQQAAKAALQKFE.

Residues 7 to 136 (LNKLKNEYNI…FNGALFLDQG (130 aa)) form the RNase III domain. Glutamate 49 provides a ligand contact to Mg(2+). The active site involves aspartate 53. Mg(2+) is bound by residues aspartate 122 and glutamate 125. Glutamate 125 is an active-site residue. One can recognise a DRBM domain in the interval 162-228 (DYKTDLQELL…AAKAALQKFE (67 aa)). The tract at residues 207-228 (GEGHNKKAAEQQAAKAALQKFE) is disordered. Low complexity predominate over residues 216 to 228 (EQQAAKAALQKFE).

It belongs to the ribonuclease III family. Homodimer. Mg(2+) serves as cofactor.

It localises to the cytoplasm. It carries out the reaction Endonucleolytic cleavage to 5'-phosphomonoester.. In terms of biological role, digests double-stranded RNA. Involved in the processing of primary rRNA transcript to yield the immediate precursors to the large and small rRNAs (23S and 16S). Processes some mRNAs, and tRNAs when they are encoded in the rRNA operon. Processes pre-crRNA and tracrRNA of type II CRISPR loci if present in the organism. This is Ribonuclease 3 from Lactobacillus acidophilus (strain ATCC 700396 / NCK56 / N2 / NCFM).